Here is a 971-residue protein sequence, read N- to C-terminus: Lon protease homolog, mitochondrial (971 aa).

The N-terminal 55 residues, 1 to 55 (MYRAGAVLLRGATRTRLLAAASAHQSFATFSQRNQSILMMKSMELAGNSGERRFY), are a transit peptide targeting the mitochondrion. The Lon N-terminal domain occupies 89 to 359 (VPMLAINRYP…IALLLIQKEK (271 aa)). Residues 190–255 (TPKNETPLNG…PPSATGEKQK (66 aa)) are disordered. A compositionally biased stretch (pro residues) spans 214–224 (LTPPPSPPPLA). Residue 512 to 519 (GPPGVGKT) coordinates ATP. The tract at residues 718–749 (AEQQNEDEEPAEKATTAITENSEAEPITSTSS) is disordered. The span at 733-749 (TAITENSEAEPITSTSS) shows a compositional bias: polar residues. In terms of domain architecture, Lon proteolytic spans 784-971 (VTPPGVIMGL…YDELYEHLFQ (188 aa)). Catalysis depends on residues Ser-878 and Lys-921.

The protein belongs to the peptidase S16 family. Homohexamer or homoheptamer. Organized in a ring with a central cavity.

It localises to the mitochondrion matrix. The enzyme catalyses Hydrolysis of proteins in presence of ATP.. Its function is as follows. ATP-dependent serine protease that mediates the selective degradation of misfolded, unassembled or oxidatively damaged polypeptides as well as certain short-lived regulatory proteins in the mitochondrial matrix. May also have a chaperone function in the assembly of inner membrane protein complexes. Participates in the regulation of mitochondrial gene expression and in the maintenance of the integrity of the mitochondrial genome. Binds to mitochondrial DNA in a site-specific manner. Involved in the degradation of transcription factor atfs-1 in the mitochondrion. The sequence is that of Lon protease homolog, mitochondrial from Caenorhabditis elegans.